Reading from the N-terminus, the 161-residue chain is Allophycocyanin beta chain (161 aa).

Asn71 bears the N4-methylasparagine mark. Cys81 contacts (2R,3E)-phycocyanobilin.

The protein belongs to the phycobiliprotein family. Heterodimer of an alpha and a beta chain. Contains one covalently linked phycocyanobilin chromophore.

The protein resides in the cellular thylakoid membrane. In terms of biological role, light-harvesting photosynthetic bile pigment-protein from the phycobiliprotein complex. Allophycocyanin has a maximum absorption at approximately 650 nanometers. The sequence is that of Allophycocyanin beta chain (apcB) from Anabaena cylindrica.